The primary structure comprises 420 residues: Glutamyl-tRNA reductase (420 aa).

Substrate-binding positions include 49-52 (TCNR), S107, 112-114 (EPQ), and Q118. C50 functions as the Nucleophile in the catalytic mechanism. 187–192 (GAGETI) serves as a coordination point for NADP(+).

Belongs to the glutamyl-tRNA reductase family. Homodimer.

The catalysed reaction is (S)-4-amino-5-oxopentanoate + tRNA(Glu) + NADP(+) = L-glutamyl-tRNA(Glu) + NADPH + H(+). It participates in porphyrin-containing compound metabolism; protoporphyrin-IX biosynthesis; 5-aminolevulinate from L-glutamyl-tRNA(Glu): step 1/2. Its function is as follows. Catalyzes the NADPH-dependent reduction of glutamyl-tRNA(Glu) to glutamate 1-semialdehyde (GSA). This chain is Glutamyl-tRNA reductase, found in Photobacterium profundum (strain SS9).